Reading from the N-terminus, the 414-residue chain is Autophagy-related protein 18 (414 aa).

4 WD repeats span residues 1-36 (MAMN…KSYE), 69-114 (KRQS…LLYT), 185-225 (AHRS…KLYQ), and 230-269 (SIPS…SSRE). Positions 226 to 230 (FRRGS) match the L/FRRG motif motif. Positions 261–314 (LSHQTSSREGSPSSALSRERAASQSSLGTSPDPDDPTDDMESSEIASRKHNGTL) are disordered. Positions 262–289 (SHQTSSREGSPSSALSRERAASQSSLGT) are enriched in polar residues. Positions 292-302 (DPDDPTDDMES) are enriched in acidic residues. WD repeat units lie at residues 309–355 (KHNG…AWIK) and 367–407 (GNAG…GGEG).

The protein belongs to the WD repeat PROPPIN family. Component of the PI(3,5)P2 regulatory complex.

The protein localises to the preautophagosomal structure membrane. It localises to the vacuole membrane. It is found in the endosome membrane. Its function is as follows. The PI(3,5)P2 regulatory complex regulates both the synthesis and turnover of phosphatidylinositol 3,5-bisphosphate (PtdIns(3,5)P2). Necessary for proper vacuole morphology. Plays an important role in osmotically-induced vacuole fragmentation. Required for cytoplasm to vacuole transport (Cvt) vesicle formation, pexophagy and starvation-induced autophagy. Involved in correct atg9 trafficking to the pre-autophagosomal structure. Might also be involved in premeiotic DNA replication. The sequence is that of Autophagy-related protein 18 (atg18) from Aspergillus terreus (strain NIH 2624 / FGSC A1156).